A 208-amino-acid chain; its full sequence is MIRSTKIVRHLAVRPDRVVDTITLDHHARHRRRVAMTADGGLEFLLDLDRAAVLDHGDALELEDGRLVQVKAADEQLVEITTFNPVRLMRAAWHIGNRHIPAEITEEAIYIVQDPVLEAMLRGLGAAVKPVVRPFKPERGAYEAAEAHGHGQAHAHDHHDHDHHDHGHDHAHHDHAHHDHAHDHHGHDHAHDHAHGASCGCGHTHHHD.

The tract at residues alanine 145–histidine 195 is disordered.

Belongs to the UreE family.

It localises to the cytoplasm. Its function is as follows. Involved in urease metallocenter assembly. Binds nickel. Probably functions as a nickel donor during metallocenter assembly. This is Urease accessory protein UreE from Azorhizobium caulinodans (strain ATCC 43989 / DSM 5975 / JCM 20966 / LMG 6465 / NBRC 14845 / NCIMB 13405 / ORS 571).